The sequence spans 1001 residues: Integrator complex subunit 7 (1001 aa).

A disordered region spans residues 980–1001; it reads DPSKQGAPAPSTSQAVGQTRRF. Polar residues predominate over residues 989–1001; it reads PSTSQAVGQTRRF.

The protein belongs to the Integrator subunit 7 family. In terms of assembly, belongs to the multiprotein complex Integrator, at least composed of IntS1, IntS2, IntS3, IntS4, omd/IntS5, IntS6, defl/IntS7, IntS8, IntS9, IntS10, IntS11, IntS12, asun/IntS13, IntS14 and IntS15. The core complex associates with protein phosphatase 2A subunits mts/PP2A and Pp2A-29B, to form the Integrator-PP2A (INTAC) complex.

It localises to the nucleus. The protein resides in the cytoplasm. Its function is as follows. Component of the integrator complex, a multiprotein complex that terminates RNA polymerase II (Pol II) transcription in the promoter-proximal region of genes. The integrator complex provides a quality checkpoint during transcription elongation by driving premature transcription termination of transcripts that are unfavorably configured for transcriptional elongation: the complex terminates transcription by (1) catalyzing dephosphorylation of the C-terminal domain (CTD) of Pol II subunit Polr2A/Rbp1 and Spt5, and (2) degrading the exiting nascent RNA transcript via endonuclease activity. The integrator complex is also involved in the 3'-end processing of the U7 snRNA, and also the spliceosomal snRNAs U1, U2, U4 and U5. In Drosophila melanogaster (Fruit fly), this protein is Integrator complex subunit 7.